The following is a 495-amino-acid chain: Lysine--tRNA ligase (495 aa).

Mg(2+) contacts are provided by Glu-406 and Glu-413.

This sequence belongs to the class-II aminoacyl-tRNA synthetase family. As to quaternary structure, homodimer. It depends on Mg(2+) as a cofactor.

It localises to the cytoplasm. The enzyme catalyses tRNA(Lys) + L-lysine + ATP = L-lysyl-tRNA(Lys) + AMP + diphosphate. The sequence is that of Lysine--tRNA ligase from Leptospira borgpetersenii serovar Hardjo-bovis (strain JB197).